The following is a 393-amino-acid chain: MKKLLKSVLVFAALSSASSLQALPVGNPAEPSLMIDGILWEGFGGDPCDPCATWCDAISMRVGYYGDFVFDRVLKTDVNKEFQMGAKPTTDTGNSAAPSTLTARENPAYGRHMQDAEMFTNAACMALNIWDRFDVFCTLGATSGYLKGNSASFNLVGLFGDNENQKTVKAESVPNMSFDQSVVELYTDTTFAWSVGARAALWECGCATLGASFQYAQSKPKVEELNVLCNAAEFTINKPKGYVGKEFPLDLTAGTDAATGTKDASIDYHEWQASLALSYRLNMFTPYIGVKWSRASFDADTIRIAQPKSATAIFDTTTLNPTIAGAGDVKTGAEGQLGDTMQIVSLQLNKMKSRKSCGIAVGTTIVDADKYAVTVETRLIDERAAHVNAQFRF.

The first 22 residues, 1-22, serve as a signal peptide directing secretion; sequence MKKLLKSVLVFAALSSASSLQA.

Belongs to the chlamydial porin (CP) (TC 1.B.2) family. As to quaternary structure, part of a disulfide cross-linked outer membrane complex (COMC) composed of the major outer membrane porin (MOMP), the small cysteine-rich protein (OmcA) and the large cysteine-rich periplasmic protein (OmcB).

The protein resides in the cell outer membrane. Its function is as follows. In elementary bodies (EBs, the infectious stage, which is able to survive outside the host cell) provides the structural integrity of the outer envelope through disulfide cross-links with the small cysteine-rich protein and the large cysteine-rich periplasmic protein. It has been described in publications as the Sarkosyl-insoluble COMC (Chlamydia outer membrane complex), and serves as the functional equivalent of peptidoglycan. Functionally, permits diffusion of specific solutes through the outer membrane. This chain is Major outer membrane porin, serovar D (ompA), found in Chlamydia trachomatis serovar D (strain ATCC VR-885 / DSM 19411 / UW-3/Cx).